A 338-amino-acid polypeptide reads, in one-letter code: Lipoate-protein ligase A (338 aa).

The region spanning 29-216 (PATQRVLFLW…AFFAHYGERI (188 aa)) is the BPL/LPL catalytic domain. ATP-binding positions include R71, 76–79 (GAVF), and K134. Position 134 (K134) interacts with (R)-lipoate.

Belongs to the LplA family. In terms of assembly, monomer.

The protein resides in the cytoplasm. It carries out the reaction L-lysyl-[lipoyl-carrier protein] + (R)-lipoate + ATP = N(6)-[(R)-lipoyl]-L-lysyl-[lipoyl-carrier protein] + AMP + diphosphate + H(+). Its pathway is protein modification; protein lipoylation via exogenous pathway; protein N(6)-(lipoyl)lysine from lipoate: step 1/2. The protein operates within protein modification; protein lipoylation via exogenous pathway; protein N(6)-(lipoyl)lysine from lipoate: step 2/2. Catalyzes both the ATP-dependent activation of exogenously supplied lipoate to lipoyl-AMP and the transfer of the activated lipoyl onto the lipoyl domains of lipoate-dependent enzymes. The sequence is that of Lipoate-protein ligase A from Salmonella paratyphi A (strain ATCC 9150 / SARB42).